A 158-amino-acid chain; its full sequence is Endoribonuclease YbeY (158 aa).

Residues histidine 118, histidine 122, and histidine 128 each coordinate Zn(2+).

Belongs to the endoribonuclease YbeY family. It depends on Zn(2+) as a cofactor.

Its subcellular location is the cytoplasm. Functionally, single strand-specific metallo-endoribonuclease involved in late-stage 70S ribosome quality control and in maturation of the 3' terminus of the 16S rRNA. This chain is Endoribonuclease YbeY, found in Haemophilus ducreyi (strain 35000HP / ATCC 700724).